A 394-amino-acid chain; its full sequence is MSVQATREDKFSFGLWTVGWQARDAFGDATRTALDPVEAVHKLAEIGAYGITFHDDDLVPFGSDAQTRDGIIAGFKKALDETGLIVPMVTTNLFTHPVFKDGGFTSNDRSVRRYAIRKVLRQMDLGAELGAKTLVLWGGREGAEYDSAKDVSAALDRYREALNLLAQYSEDRGYGLRFAIEPKPNEPRGDILLPTAGHAIAFVQELERPELFGINPETGHEQMSNLNFTQGIAQALWHKKLFHIDLNGQHGPKFDQDLVFGHGDLLNAFSLVDLLENGPDGAPAYDGPRHFDYKPSRTEDYDGVWESAKANIRMYLLLKERAKAFRADPEVQEALAASKVAELKTPTLNPGEGYAELLADRSAFEDYDADAVGAKGFGFVKLNQLAIEHLLGAR.

Residues His54 and Asp57 contribute to the active site. Glu181, Glu217, His220, Asp245, Asp255, Asp257, and Asp292 together coordinate Mg(2+).

The protein belongs to the xylose isomerase family. As to quaternary structure, homotetramer. Mg(2+) serves as cofactor.

Its subcellular location is the cytoplasm. It carries out the reaction alpha-D-xylose = alpha-D-xylulofuranose. In Actinoplanes missouriensis (strain ATCC 14538 / DSM 43046 / CBS 188.64 / JCM 3121 / NBRC 102363 / NCIMB 12654 / NRRL B-3342 / UNCC 431), this protein is Xylose isomerase (xylA).